A 449-amino-acid chain; its full sequence is Required for meiotic nuclear division protein 1 homolog (449 aa).

Residues 1–16 (MPATLLRAVAGSHRVL) constitute a mitochondrion transit peptide.

Belongs to the RMD1/sif2 family. Homooligomer.

It is found in the mitochondrion. Its function is as follows. Required for mitochondrial translation, possibly by coordinating the assembly or maintenance of the mitochondrial ribosome. The polypeptide is Required for meiotic nuclear division protein 1 homolog (RMND1) (Pongo abelii (Sumatran orangutan)).